A 169-amino-acid polypeptide reads, in one-letter code: Cytochrome c oxidase subunit 4 isoform 1, mitochondrial (169 aa).

Residues 1–22 (MLATRVFSLVGKRAISTSVCVR) constitute a mitochondrion transit peptide. The Mitochondrial matrix portion of the chain corresponds to 23–98 (AHESVVKSED…SFAEMNRGSN (76 aa)). An N6-acetyllysine; alternate modification is found at Lys-29. At Lys-29 the chain carries N6-succinyllysine; alternate. The residue at position 53 (Lys-53) is an N6-acetyllysine. Residues Ser-56 and Ser-58 each carry the phosphoserine modification. Residue Lys-60 is modified to N6-acetyllysine; alternate. At Lys-60 the chain carries N6-succinyllysine; alternate. Lys-67 carries the N6-acetyllysine modification. A helical membrane pass occupies residues 99–124 (EWKTVVGGAMFFIGFTALVIMWQKHY). The Mitochondrial intermembrane segment spans residues 125 to 169 (VYGPLPQSFDKEWVAKQTKRMLDMKVNPIQGLASKWDYEKNEWKK).

The protein belongs to the cytochrome c oxidase IV family. In terms of assembly, component of the cytochrome c oxidase (complex IV, CIV), a multisubunit enzyme composed of 14 subunits. The complex is composed of a catalytic core of 3 subunits MT-CO1, MT-CO2 and MT-CO3, encoded in the mitochondrial DNA, and 11 supernumerary subunits COX4I1 (or COX4I2), COX5A, COX5B, COX6A1 (or COX6A2), COX6B1 (or COX6B2), COX6C, COX7A2 (or COX7A1), COX7B, COX7C, COX8A and NDUFA4, which are encoded in the nuclear genome. The complex exists as a monomer or a dimer and forms supercomplexes (SCs) in the inner mitochondrial membrane with NADH-ubiquinone oxidoreductase (complex I, CI) and ubiquinol-cytochrome c oxidoreductase (cytochrome b-c1 complex, complex III, CIII), resulting in different assemblies (supercomplex SCI(1)III(2)IV(1) and megacomplex MCI(2)III(2)IV(2)). Interacts with AFG1L. Interacts with PHB2; the interaction decreases in absence of SPHK2. Interacts with ABCB7; this interaction allows the regulation of cellular iron homeostasis and cellular reactive oxygen species (ROS) levels in cardiomyocytes. Interacts with FLVCR2; this interaction occurs in the absence of heme and is disrupted upon heme binding. Interacts with IRGC. In terms of tissue distribution, ubiquitous.

The protein resides in the mitochondrion inner membrane. The protein operates within energy metabolism; oxidative phosphorylation. Its function is as follows. Component of the cytochrome c oxidase, the last enzyme in the mitochondrial electron transport chain which drives oxidative phosphorylation. The respiratory chain contains 3 multisubunit complexes succinate dehydrogenase (complex II, CII), ubiquinol-cytochrome c oxidoreductase (cytochrome b-c1 complex, complex III, CIII) and cytochrome c oxidase (complex IV, CIV), that cooperate to transfer electrons derived from NADH and succinate to molecular oxygen, creating an electrochemical gradient over the inner membrane that drives transmembrane transport and the ATP synthase. Cytochrome c oxidase is the component of the respiratory chain that catalyzes the reduction of oxygen to water. Electrons originating from reduced cytochrome c in the intermembrane space (IMS) are transferred via the dinuclear copper A center (CU(A)) of subunit 2 and heme A of subunit 1 to the active site in subunit 1, a binuclear center (BNC) formed by heme A3 and copper B (CU(B)). The BNC reduces molecular oxygen to 2 water molecules using 4 electrons from cytochrome c in the IMS and 4 protons from the mitochondrial matrix. This is Cytochrome c oxidase subunit 4 isoform 1, mitochondrial from Homo sapiens (Human).